We begin with the raw amino-acid sequence, 872 residues long: Cellulose synthase catalytic subunit [UDP-forming] (872 aa).

4 helical membrane passes run 30-50, 151-171, 173-193, and 230-250; these read SAFS…FIPL, ILGI…TQPF, PLAQ…VRRM, and LVCG…LVLG. Residues 271 to 364 are catalytic subdomain A; sequence LWPSVDIFVP…FVSIFDCDHV (94 aa). D313 is an active-site residue. Residues D360 and D362 each contribute to the substrate site. The segment at 441-501 is catalytic subdomain B; the sequence is KPLDEIGGIA…GQRIRWARGM (61 aa). The active site involves D457. Helical transmembrane passes span 525–545, 547–567, 592–612, 640–660, and 668–688; these read VNAM…TAPL, FLLL…LFVL, IYET…LINP, IFLV…YFYG, and VVVS…AVAV. Residues 694–790 enclose the PilZ domain; that stretch reads QVRRSHRVEM…QHIDFVQCTF (97 aa). The helical transmembrane segment at 833 to 853 threads the bilayer; the sequence is SVKGIFRVLTSLVSWVVSFIP.

Belongs to the glycosyltransferase 2 family. It depends on Mg(2+) as a cofactor.

The protein resides in the cell inner membrane. It catalyses the reaction [(1-&gt;4)-beta-D-glucosyl](n) + UDP-alpha-D-glucose = [(1-&gt;4)-beta-D-glucosyl](n+1) + UDP + H(+). The protein operates within glycan metabolism; bacterial cellulose biosynthesis. Its activity is regulated as follows. Activated by bis-(3'-5') cyclic diguanylic acid (c-di-GMP). Catalytic subunit of cellulose synthase. It polymerizes uridine 5'-diphosphate glucose to cellulose, which is produced as an extracellular component for mechanical and chemical protection at the onset of the stationary phase, when the cells exhibit multicellular behavior (rdar morphotype). Coexpression of cellulose and thin aggregative fimbriae (curli fimbrae or fibers) leads to a hydrophobic network with tightly packed cells embedded in a highly inert matrix that confers cohesion, elasticity and tissue-like properties to colonies. The protein is Cellulose synthase catalytic subunit [UDP-forming] (bcsA) of Escherichia coli (strain K12).